A 391-amino-acid chain; its full sequence is Chorismate synthase (391 aa).

NADP(+) is bound by residues R39 and R45. Residues R133–S135, Q254–A255, G299, K314–T318, and R340 contribute to the FMN site.

This sequence belongs to the chorismate synthase family. As to quaternary structure, homotetramer. FMNH2 serves as cofactor.

The catalysed reaction is 5-O-(1-carboxyvinyl)-3-phosphoshikimate = chorismate + phosphate. The protein operates within metabolic intermediate biosynthesis; chorismate biosynthesis; chorismate from D-erythrose 4-phosphate and phosphoenolpyruvate: step 7/7. In terms of biological role, catalyzes the anti-1,4-elimination of the C-3 phosphate and the C-6 proR hydrogen from 5-enolpyruvylshikimate-3-phosphate (EPSP) to yield chorismate, which is the branch point compound that serves as the starting substrate for the three terminal pathways of aromatic amino acid biosynthesis. This reaction introduces a second double bond into the aromatic ring system. The protein is Chorismate synthase of Symbiobacterium thermophilum (strain DSM 24528 / JCM 14929 / IAM 14863 / T).